The primary structure comprises 117 residues: Ig heavy chain V region 108A (117 aa).

Residues 1–19 form the signal peptide; the sequence is MGWSWIFLFLLSGTAGVHS. Residues 20 to 117 enclose the Ig-like domain; that stretch reads EVQLQQSGPE…EDSAVYYCAR (98 aa).

The polypeptide is Ig heavy chain V region 108A (Igh-VJ558) (Mus musculus (Mouse)).